Consider the following 449-residue polypeptide: MAHPVMTFDKPSSASPKISFVSLGCPKALVDSERIITRLRAEGYELTKSHRGADAVIVNTCGFLDSAKAESLAAIGEAAAENGKIIVTGCMGAEPESLQTAYPDLFAITGPQAYESVMEAVHAAIAPPDNPFTELVPPQGIKLTPRHYAYLKISEGCNNRCSFCIIPHLRGDLVSRPIGEILQEAEKLVSAGVKEILVVSQDTSAYGVDLKYAETLYGDRTLRSKFIDLARELGSLGVWVRLHYIYPYPHVDAVLDLMAEGKILPYLDIPFQHASRNVLRAMRRPGDQEKTLSRIEEWRKLCPDLTLRSTFIVGFPGETEDDFQILLDWLSEAKLDRVGAFKYEPVADAPANDLDLTPVAPEVQTRRYQRFMEHQQKISARRLREKIGKHVSVIIDEASPKAAIGRTKGDAPSIDGKVHITTHRPLRVGDIVKVKIEAADAYDLHGKAV.

The 111-residue stretch at 16–126 (PKISFVSLGC…VMEAVHAAIA (111 aa)) folds into the MTTase N-terminal domain. 6 residues coordinate [4Fe-4S] cluster: C25, C61, C90, C157, C161, and C164. Residues 143–381 (LTPRHYAYLK…MEHQQKISAR (239 aa)) enclose the Radical SAM core domain. Residues 384 to 449 (REKIGKHVSV…DAYDLHGKAV (66 aa)) form the TRAM domain.

The protein belongs to the methylthiotransferase family. RimO subfamily. [4Fe-4S] cluster serves as cofactor.

It localises to the cytoplasm. The enzyme catalyses L-aspartate(89)-[ribosomal protein uS12]-hydrogen + (sulfur carrier)-SH + AH2 + 2 S-adenosyl-L-methionine = 3-methylsulfanyl-L-aspartate(89)-[ribosomal protein uS12]-hydrogen + (sulfur carrier)-H + 5'-deoxyadenosine + L-methionine + A + S-adenosyl-L-homocysteine + 2 H(+). Catalyzes the methylthiolation of an aspartic acid residue of ribosomal protein uS12. The chain is Ribosomal protein uS12 methylthiotransferase RimO from Beijerinckia indica subsp. indica (strain ATCC 9039 / DSM 1715 / NCIMB 8712).